The sequence spans 597 residues: Elongation factor 4 (597 aa).

A tr-type G domain is found at 2 to 184; it reads KHIRNFSIIA…TIVKCIPAPE (183 aa). GTP-binding positions include 14–19 and 131–134; these read DHGKST and NKID.

The protein belongs to the TRAFAC class translation factor GTPase superfamily. Classic translation factor GTPase family. LepA subfamily.

Its subcellular location is the cell inner membrane. The enzyme catalyses GTP + H2O = GDP + phosphate + H(+). Functionally, required for accurate and efficient protein synthesis under certain stress conditions. May act as a fidelity factor of the translation reaction, by catalyzing a one-codon backward translocation of tRNAs on improperly translocated ribosomes. Back-translocation proceeds from a post-translocation (POST) complex to a pre-translocation (PRE) complex, thus giving elongation factor G a second chance to translocate the tRNAs correctly. Binds to ribosomes in a GTP-dependent manner. This is Elongation factor 4 from Aliivibrio salmonicida (strain LFI1238) (Vibrio salmonicida (strain LFI1238)).